A 421-amino-acid polypeptide reads, in one-letter code: General transcription factor IIH subunit 2 (421 aa).

A disordered region spans residues 1–26 (MSNQRKRSNDEREEEDDEDAEGIGEW). A compositionally biased stretch (acidic residues) spans 11 to 24 (EREEEDDEDAEGIG). A VWFA domain is found at 83-272 (YLYIVIDFSR…IAEFAIANLI (190 aa)). An RING-type zinc finger spans residues 362–408 (CFGCQQSLIGAGNKPVPCVTCRKCKHYFCLDCDIYIHESLHNCPGCE).

The protein belongs to the GTF2H2 family. In terms of assembly, component of the 7-subunit TFIIH core complex composed of XPB, XPD, TFB1/GTF2H1, GTF2H2/P44, TFB4/GTF2H3, TFB2/GTF2H4 and TFB5/GTF2H5, which is active in NER. The core complex associates with the 3-subunit CDK-activating kinase (CAK) module composed of CYCH1/cyclin H1, CDKD and MAT1/At4g30820 to form the 10-subunit holoenzyme (holo-TFIIH) active in transcription. Interacts with XPD.

It is found in the nucleus. In terms of biological role, component of the general transcription and DNA repair factor IIH (TFIIH) core complex, which is involved in general and transcription-coupled nucleotide excision repair (NER) of damaged DNA and, when complexed to CAK, in RNA transcription by RNA polymerase II. In NER, TFIIH acts by opening DNA around the lesion to allow the excision of the damaged oligonucleotide and its replacement by a new DNA fragment. In transcription, TFIIH has an essential role in transcription initiation. When the pre-initiation complex (PIC) has been established, TFIIH is required for promoter opening and promoter escape. Phosphorylation of the C-terminal tail (CTD) of the largest subunit of RNA polymerase II by the kinase module CAK controls the initiation of transcription. Can restore UV resistance in the NER-deficient ssl1-1 yeast mutant. In Arabidopsis thaliana (Mouse-ear cress), this protein is General transcription factor IIH subunit 2.